The chain runs to 348 residues: Isopentenyl-diphosphate delta-isomerase (348 aa).

Residue 11–12 (RK) participates in substrate binding. Residues 70 to 72 (AMT), Ser100, and Asn131 contribute to the FMN site. 100 to 102 (SQR) serves as a coordination point for substrate. Residue Gln165 participates in substrate binding. Glu166 contributes to the Mg(2+) binding site. Residues Lys197, Thr231, 278–280 (GIR), and 299–300 (AR) contribute to the FMN site.

It belongs to the IPP isomerase type 2 family. As to quaternary structure, homooctamer. Dimer of tetramers. FMN is required as a cofactor. The cofactor is NADPH. Requires Mg(2+) as cofactor.

The protein localises to the cytoplasm. The enzyme catalyses isopentenyl diphosphate = dimethylallyl diphosphate. In terms of biological role, involved in the biosynthesis of isoprenoids. Catalyzes the 1,3-allylic rearrangement of the homoallylic substrate isopentenyl (IPP) to its allylic isomer, dimethylallyl diphosphate (DMAPP). In Mycobacterium marinum (strain ATCC BAA-535 / M), this protein is Isopentenyl-diphosphate delta-isomerase.